The sequence spans 445 residues: StAR-related lipid transfer protein 3 (445 aa).

At 1 to 51 (MSKLPRELTRDLERSLPAVASLGSSLSHSQSLSSHLLPPPEKRRAISDVRR) the chain is on the cytoplasmic side. In terms of domain architecture, MENTAL spans 46–217 (ISDVRRTFCL…YSPPESFAGS (172 aa)). Residues 52–72 (TFCLFVTFDLLFISLLWIIEL) form a helical membrane-spanning segment. Topologically, residues 73 to 94 (NTNTGIRKNLEQEIIQYNFKTS) are extracellular. The helical transmembrane segment at 95 to 115 (FFDIFVLAFFRFSGLLLGYAV) threads the bilayer. At 116–120 (LRLRH) the chain is on the cytoplasmic side. The chain crosses the membrane as a helical span at residues 121-141 (WWVIAVTTLVSSAFLIVKVIL). At 142 to 148 (SELLSKG) the chain is on the extracellular side. A helical membrane pass occupies residues 149 to 169 (AFGYLLPIVSFVLAWLETWFL). Topologically, residues 170–445 (DFKVLPQEAE…QRISELGARA (276 aa)) are cytoplasmic. An FFAT motif is present at residues 206–212 (QFYSPPE). At Ser-209 the chain carries Phosphoserine. Residues 230–443 (SFSAQEREYI…LRQRISELGA (214 aa)) enclose the START domain.

This sequence belongs to the STARD3 family. Homodimer. Interacts (via the MENTAL domain) with STARD3NL. Interacts (via phosphorylated FFAT motif) with VAPA (via MSP domain). Interacts (via phosphorylated FFAT motif) with VAPB (via MSP domain). Interacts (via phosphorylated FFAT motif) with MOSPD2 (via MSP domain); this interaction allows enrichment of MOSPD2 around endosomes. Post-translationally, phosphorylation at Ser-209 is necessary and sufficient for the direct interaction of the phosphorylated FFAT motif with the MSP domain of MOSPD2, VAPA and VAPB and allows the tethering of two membranes that participates in the formation of ER-endosome contacts. Phosphorylation of the FFAT motif leads to conformation changes. Additional phosphorylations around the core FFAT motif (QFYSPPE) are not essential but strengthen the interaction with MOSPD2, VAPA and VAPB. Phosphorylation at Ser-209 of FFAT motif drives membrane tethering between the endoplasmic reticulum and late endosomes via interaction with VAPA and VAPB that in turn allows the efficient transport of sterol mediated by the START domain. As to expression, expressed in retina.

The protein localises to the late endosome membrane. It carries out the reaction cholesterol(in) = cholesterol(out). Its function is as follows. Sterol-binding protein that mediates cholesterol transport from the endoplasmic reticulum to endosomes. The sterol transport mechanism is triggered by phosphorylation of FFAT motif that leads to membrane tethering between the endoplasmic reticulum and late endosomes via interaction with VAPA and VAPB. Acts as a lipid transfer protein that redirects sterol to the endosome at the expense of the cell membrane and favors membrane formation inside endosomes. May also mediate cholesterol transport between other membranes, such as mitochondria membrane or cell membrane. However, such results need additional experimental evidences; probably mainly mediates cholesterol transport from the endoplasmic reticulum to endosomes. Does not activate transcriptional cholesterol sensing. Able to bind other lipids, such as lutein, a xanthophyll carotenoids that form the macular pigment of the retina. The chain is StAR-related lipid transfer protein 3 from Homo sapiens (Human).